The chain runs to 168 residues: Protein SprT (168 aa).

The region spanning Glu20 to Ile166 is the SprT-like domain. A Zn(2+)-binding site is contributed by His78. The active site involves Glu79. Position 82 (His82) interacts with Zn(2+).

The protein belongs to the SprT family. Zn(2+) is required as a cofactor.

The protein resides in the cytoplasm. The sequence is that of Protein SprT from Proteus mirabilis (strain HI4320).